Reading from the N-terminus, the 162-residue chain is Transcription regulatory protein motB (162 aa).

Monomer. Homodimer.

Compacts the host nucleoid. Probably dysregulates hundreds of host genes including derepression of most of the H-NS regulon. Plays a role in the transcriptional regulation of middle promoters. The protein is Transcription regulatory protein motB (motB) of Enterobacteria phage T4 (Bacteriophage T4).